Reading from the N-terminus, the 249-residue chain is Probable septum site-determining protein MinC (249 aa).

Residues 89–130 (SLFEPGMPPAMKGGRPAPDFEVPEVDPADPPKAGKGKAAAPI) are disordered. Low complexity predominate over residues 119–129 (PKAGKGKAAAP).

It belongs to the MinC family. As to quaternary structure, interacts with MinD and FtsZ.

In terms of biological role, cell division inhibitor that blocks the formation of polar Z ring septums. Rapidly oscillates between the poles of the cell to destabilize FtsZ filaments that have formed before they mature into polar Z rings. Prevents FtsZ polymerization. In Rhizobium meliloti (strain 1021) (Ensifer meliloti), this protein is Probable septum site-determining protein MinC.